Consider the following 231-residue polypeptide: ATP phosphoribosyltransferase (231 aa).

The protein belongs to the ATP phosphoribosyltransferase family. Short subfamily. In terms of assembly, heteromultimer composed of HisG and HisZ subunits.

The protein resides in the cytoplasm. It catalyses the reaction 1-(5-phospho-beta-D-ribosyl)-ATP + diphosphate = 5-phospho-alpha-D-ribose 1-diphosphate + ATP. The protein operates within amino-acid biosynthesis; L-histidine biosynthesis; L-histidine from 5-phospho-alpha-D-ribose 1-diphosphate: step 1/9. Catalyzes the condensation of ATP and 5-phosphoribose 1-diphosphate to form N'-(5'-phosphoribosyl)-ATP (PR-ATP). Has a crucial role in the pathway because the rate of histidine biosynthesis seems to be controlled primarily by regulation of HisG enzymatic activity. This is ATP phosphoribosyltransferase (hisG) from Rhizobium etli (strain CIAT 652).